Consider the following 360-residue polypeptide: Phosphoserine aminotransferase (360 aa).

Arginine 42 contacts L-glutamate. Pyridoxal 5'-phosphate-binding residues include tryptophan 102, threonine 152, aspartate 171, and glutamine 194. Lysine 195 is modified (N6-(pyridoxal phosphate)lysine). Pyridoxal 5'-phosphate is bound at residue 237–238 (NT).

Belongs to the class-V pyridoxal-phosphate-dependent aminotransferase family. SerC subfamily. Homodimer. Pyridoxal 5'-phosphate is required as a cofactor.

The protein resides in the cytoplasm. The catalysed reaction is O-phospho-L-serine + 2-oxoglutarate = 3-phosphooxypyruvate + L-glutamate. It carries out the reaction 4-(phosphooxy)-L-threonine + 2-oxoglutarate = (R)-3-hydroxy-2-oxo-4-phosphooxybutanoate + L-glutamate. It functions in the pathway amino-acid biosynthesis; L-serine biosynthesis; L-serine from 3-phospho-D-glycerate: step 2/3. The protein operates within cofactor biosynthesis; pyridoxine 5'-phosphate biosynthesis; pyridoxine 5'-phosphate from D-erythrose 4-phosphate: step 3/5. Functionally, catalyzes the reversible conversion of 3-phosphohydroxypyruvate to phosphoserine and of 3-hydroxy-2-oxo-4-phosphonooxybutanoate to phosphohydroxythreonine. The chain is Phosphoserine aminotransferase from Coxiella burnetii (strain Dugway 5J108-111).